Here is a 466-residue protein sequence, read N- to C-terminus: A-type ATP synthase subunit B (466 aa).

This sequence belongs to the ATPase alpha/beta chains family. In terms of assembly, has multiple subunits with at least A(3), B(3), C, D, E, F, H, I and proteolipid K(x).

The protein localises to the cell membrane. In terms of biological role, component of the A-type ATP synthase that produces ATP from ADP in the presence of a proton gradient across the membrane. The B chain is a regulatory subunit. The sequence is that of A-type ATP synthase subunit B from Sulfolobus acidocaldarius (strain ATCC 33909 / DSM 639 / JCM 8929 / NBRC 15157 / NCIMB 11770).